Consider the following 333-residue polypeptide: D-fructose 1,6-bisphosphatase class 2/sedoheptulose 1,7-bisphosphatase (333 aa).

Mn(2+)-binding residues include aspartate 33, glutamate 57, aspartate 85, and glutamate 88. Substrate-binding positions include 88–90 (EGT), tyrosine 119, 164–166 (RAR), and 186–188 (DGD). Glutamate 213 contacts Mn(2+).

It belongs to the FBPase class 2 family. As to quaternary structure, homotetramer. Requires Mn(2+) as cofactor.

It carries out the reaction beta-D-fructose 1,6-bisphosphate + H2O = beta-D-fructose 6-phosphate + phosphate. The catalysed reaction is D-sedoheptulose 1,7-bisphosphate + H2O = D-sedoheptulose 7-phosphate + phosphate. It participates in carbohydrate biosynthesis; Calvin cycle. Functionally, catalyzes the hydrolysis of fructose 1,6-bisphosphate (Fru 1,6-P2) and sedoheptulose 1,7-bisphosphate (Sed 1,7-P2) to fructose 6-phosphate and sedoheptulose 7-phosphate, respectively. The protein is D-fructose 1,6-bisphosphatase class 2/sedoheptulose 1,7-bisphosphatase of Prochlorococcus marinus (strain MIT 9515).